Consider the following 249-residue polypeptide: DNA repair protein RecO (249 aa).

The protein belongs to the RecO family.

In terms of biological role, involved in DNA repair and RecF pathway recombination. The protein is DNA repair protein RecO of Solidesulfovibrio magneticus (strain ATCC 700980 / DSM 13731 / RS-1) (Desulfovibrio magneticus).